Consider the following 783-residue polypeptide: BMP/retinoic acid-inducible neural-specific protein 2 (783 aa).

Residues 1 to 33 (MRWPCSSWFRGLWPEAAPWAVLLALGVPGWVLA) form the signal peptide. Positions 85–281 (RYRIYREFAR…FVAAALSYIT (197 aa)) constitute an MACPF domain. Asn185, Asn354, Asn473, Asn579, Asn626, and Asn658 each carry an N-linked (GlcNAc...) asparagine glycan.

The protein belongs to the BRINP family. In terms of tissue distribution, weakly expressed in embryonic stem (ES) cells. Strongly expressed in ES-derived neural stem cells (NSCs).

The protein localises to the secreted. Functionally, inhibits neuronal cell proliferation by negative regulation of the cell cycle transition. This Mus musculus (Mouse) protein is BMP/retinoic acid-inducible neural-specific protein 2 (Brinp2).